Reading from the N-terminus, the 265-residue chain is Phosphatidylserine decarboxylase proenzyme (265 aa).

S183 (schiff-base intermediate with substrate; via pyruvic acid) is an active-site residue. S183 is modified (pyruvic acid (Ser); by autocatalysis). The tract at residues 216–246 (TAPQTESEPESEPALQTAPVETAANPSAEQR) is disordered.

Belongs to the phosphatidylserine decarboxylase family. PSD-A subfamily. As to quaternary structure, heterodimer of a large membrane-associated beta subunit and a small pyruvoyl-containing alpha subunit. The cofactor is pyruvate. In terms of processing, is synthesized initially as an inactive proenzyme. Formation of the active enzyme involves a self-maturation process in which the active site pyruvoyl group is generated from an internal serine residue via an autocatalytic post-translational modification. Two non-identical subunits are generated from the proenzyme in this reaction, and the pyruvate is formed at the N-terminus of the alpha chain, which is derived from the carboxyl end of the proenzyme. The post-translation cleavage follows an unusual pathway, termed non-hydrolytic serinolysis, in which the side chain hydroxyl group of the serine supplies its oxygen atom to form the C-terminus of the beta chain, while the remainder of the serine residue undergoes an oxidative deamination to produce ammonia and the pyruvoyl prosthetic group on the alpha chain.

It localises to the cell membrane. It carries out the reaction a 1,2-diacyl-sn-glycero-3-phospho-L-serine + H(+) = a 1,2-diacyl-sn-glycero-3-phosphoethanolamine + CO2. It functions in the pathway phospholipid metabolism; phosphatidylethanolamine biosynthesis; phosphatidylethanolamine from CDP-diacylglycerol: step 2/2. Its function is as follows. Catalyzes the formation of phosphatidylethanolamine (PtdEtn) from phosphatidylserine (PtdSer). This Neisseria meningitidis serogroup B (strain ATCC BAA-335 / MC58) protein is Phosphatidylserine decarboxylase proenzyme.